The following is a 264-amino-acid chain: Small ribosomal subunit protein uS2 (264 aa).

A compositionally biased stretch (acidic residues) spans 243-253; the sequence is IEAAEDGEEVD. Residues 243-264 are disordered; that stretch reads IEAAEDGEEVDNAQLTSSQGRS. Positions 255-264 are enriched in polar residues; it reads AQLTSSQGRS.

This sequence belongs to the universal ribosomal protein uS2 family.

The chain is Small ribosomal subunit protein uS2 from Deinococcus geothermalis (strain DSM 11300 / CIP 105573 / AG-3a).